Consider the following 1199-residue polypeptide: DNA-directed RNA polymerase subunit beta' (1199 aa).

Residues Cys60, Cys62, Cys75, and Cys78 each coordinate Zn(2+). Mg(2+)-binding residues include Asp449, Asp451, and Asp453. Zn(2+) contacts are provided by Cys818, Cys892, Cys899, and Cys902.

Belongs to the RNA polymerase beta' chain family. In terms of assembly, the RNAP catalytic core consists of 2 alpha, 1 beta, 1 beta' and 1 omega subunit. When a sigma factor is associated with the core the holoenzyme is formed, which can initiate transcription. Requires Mg(2+) as cofactor. Zn(2+) is required as a cofactor.

The enzyme catalyses RNA(n) + a ribonucleoside 5'-triphosphate = RNA(n+1) + diphosphate. DNA-dependent RNA polymerase catalyzes the transcription of DNA into RNA using the four ribonucleoside triphosphates as substrates. The polypeptide is DNA-directed RNA polymerase subunit beta' (Bacillus licheniformis (strain ATCC 14580 / DSM 13 / JCM 2505 / CCUG 7422 / NBRC 12200 / NCIMB 9375 / NCTC 10341 / NRRL NRS-1264 / Gibson 46)).